A 267-amino-acid chain; its full sequence is Acyl-[acyl-carrier-protein]--UDP-N-acetylglucosamine O-acyltransferase (267 aa).

Belongs to the transferase hexapeptide repeat family. LpxA subfamily. In terms of assembly, homotrimer.

It localises to the cytoplasm. It carries out the reaction a (3R)-hydroxyacyl-[ACP] + UDP-N-acetyl-alpha-D-glucosamine = a UDP-3-O-[(3R)-3-hydroxyacyl]-N-acetyl-alpha-D-glucosamine + holo-[ACP]. It functions in the pathway glycolipid biosynthesis; lipid IV(A) biosynthesis; lipid IV(A) from (3R)-3-hydroxytetradecanoyl-[acyl-carrier-protein] and UDP-N-acetyl-alpha-D-glucosamine: step 1/6. Involved in the biosynthesis of lipid A, a phosphorylated glycolipid that anchors the lipopolysaccharide to the outer membrane of the cell. The polypeptide is Acyl-[acyl-carrier-protein]--UDP-N-acetylglucosamine O-acyltransferase (Cupriavidus pinatubonensis (strain JMP 134 / LMG 1197) (Cupriavidus necator (strain JMP 134))).